The sequence spans 438 residues: Hydrogenobyrinate a,c-diamide synthase (438 aa).

Positions 247 to 438 (RIALAEDAAF…TFFHAIAKGG (192 aa)) constitute a GATase cobBQ-type domain. C329 functions as the Nucleophile in the catalytic mechanism.

This sequence belongs to the CobB/CbiA family. Mg(2+) serves as cofactor.

It catalyses the reaction hydrogenobyrinate + 2 L-glutamine + 2 ATP + 2 H2O = hydrogenobyrinate a,c-diamide + 2 L-glutamate + 2 ADP + 2 phosphate + 2 H(+). Its pathway is cofactor biosynthesis; adenosylcobalamin biosynthesis; cob(II)yrinate a,c-diamide from precorrin-2 (aerobic route): step 9/10. In terms of biological role, catalyzes the ATP-dependent amidation of the two carboxylate groups at positions a and c of hydrogenobyrinate, using either L-glutamine or ammonia as the nitrogen source. This is Hydrogenobyrinate a,c-diamide synthase from Agrobacterium fabrum (strain C58 / ATCC 33970) (Agrobacterium tumefaciens (strain C58)).